The sequence spans 636 residues: MNEINVTLPDGSQRPLPAGASIFDLAASIGAGLAKAAIAGKIDGNLVDLNTPLADGARVEIITEKSPEALEIIRHSTSHLMAQAVKALFPQAKVTIGPAIETGFYYDFDVDHPFTPEDLEKIEEKMRELAKADLKIERKELTSADAIALFKGMGENYKVELIEDLGADKVSLYSQGDFVDLCRGPHLPKTSFIKAFKLTSIAGAYWRGDEKRPMLQRVYGTAFGDKKELEAYLARIEEAKKRDHRKLGRELDLFSFNDEVGAGLVIWHPKGAMLRTILEDFERKEHLKRGYDIVLGPQILKTELWQRSGHYENYRENMYFTTVDEQSYGVKPMNCLAHMMIYRSQLRSYRDLPLRYFELGTVHRHERAGVLHGLLRVRGFTQDDAHILCTPEQLDAEIKGVIQFVTEVMGIFGFEFEMELSTRPEKSIGSDDAWELATNALLNALKDSGRPYEINEGDGAFYGPKIDIKLRDALDRRWQCATIQCDFTLPERFDLTYVDADGEKKRPVMVHRVILGAIERFIGVLIEHFAGNFPTWLAPVQATIVTVTDNQIPYAQAAFDKLRAAGIRVQKDFRNEKLGFKIREAQLQKIPYMLVVGDKEVESGMLAPRFRDGKNLESMTPEQFVSFIESEVKSYK.

In terms of domain architecture, TGS spans 1–63 (MNEINVTLPD…ADGARVEIIT (63 aa)). A catalytic region spans residues 243-534 (DHRKLGRELD…LIEHFAGNFP (292 aa)). The Zn(2+) site is built by C335, H386, and H511.

It belongs to the class-II aminoacyl-tRNA synthetase family. As to quaternary structure, homodimer. Zn(2+) serves as cofactor.

It localises to the cytoplasm. The catalysed reaction is tRNA(Thr) + L-threonine + ATP = L-threonyl-tRNA(Thr) + AMP + diphosphate + H(+). Catalyzes the attachment of threonine to tRNA(Thr) in a two-step reaction: L-threonine is first activated by ATP to form Thr-AMP and then transferred to the acceptor end of tRNA(Thr). Also edits incorrectly charged L-seryl-tRNA(Thr). The protein is Threonine--tRNA ligase of Citrifermentans bemidjiense (strain ATCC BAA-1014 / DSM 16622 / JCM 12645 / Bem) (Geobacter bemidjiensis).